Here is a 238-residue protein sequence, read N- to C-terminus: Transcriptional activator protein AnoR (238 aa).

In terms of domain architecture, HTH luxR-type spans E170–G236. The H-T-H motif DNA-binding region spans S195–C214.

This sequence belongs to the autoinducer-regulated transcriptional regulatory protein family.

In terms of biological role, positively regulates the expression of anoI. Required for biofilm formation and motility. Probably part of a quorum-sensing system with AnoI. The polypeptide is Transcriptional activator protein AnoR (Acinetobacter nosocomialis).